A 1148-amino-acid chain; its full sequence is Minor outer capsid protein P2 (1148 aa).

Residues 930 to 1148 (QDGTANIFQK…QYIQSIYDEL (219 aa)) enclose the PPPDE domain. Active-site residues include His-954 and Cys-1111.

It belongs to the phytoreovirus minor outer capsid protein P2 family.

The protein localises to the virion. It localises to the host cytoplasm. In terms of biological role, minor capsid protein present in the outer capsid, which is required for adsorption of the virus onto host insect cells. The chain is Minor outer capsid protein P2 from Nephotettix cincticeps (Green rice leafhopper).